The primary structure comprises 309 residues: Phytoene synthase (309 aa).

It belongs to the phytoene/squalene synthase family. The cofactor is ATP. It depends on Mn(2+) as a cofactor. Requires Mg(2+) as cofactor.

It participates in carotenoid biosynthesis; phytoene biosynthesis. Involved in the biosynthesis of carotenoids. Catalyzes the condensation of two molecules of geranylgeranyl diphosphate (GGPP) to give prephytoene diphosphate (PPPP) and the subsequent rearrangement of the cyclopropylcarbinyl intermediate to yield phytoene. In Pseudescherichia vulneris (Escherichia vulneris), this protein is Phytoene synthase (crtB).